The chain runs to 333 residues: Dihydroorotate dehydrogenase (quinone) (333 aa).

FMN contacts are provided by residues 56-60 (AGLDK) and threonine 80. Lysine 60 is a substrate binding site. 105–109 (NRMGF) contributes to the substrate binding site. FMN-binding residues include asparagine 133 and asparagine 166. Asparagine 166 contributes to the substrate binding site. Serine 169 functions as the Nucleophile in the catalytic mechanism. A substrate-binding site is contributed by asparagine 171. The FMN site is built by lysine 211 and threonine 239. 240–241 (NT) contacts substrate. FMN contacts are provided by residues glycine 262, glycine 291, and 312-313 (YS).

Belongs to the dihydroorotate dehydrogenase family. Type 2 subfamily. Monomer. The cofactor is FMN.

The protein localises to the cell membrane. It carries out the reaction (S)-dihydroorotate + a quinone = orotate + a quinol. It functions in the pathway pyrimidine metabolism; UMP biosynthesis via de novo pathway; orotate from (S)-dihydroorotate (quinone route): step 1/1. Catalyzes the conversion of dihydroorotate to orotate with quinone as electron acceptor. This is Dihydroorotate dehydrogenase (quinone) from Legionella pneumophila (strain Lens).